The chain runs to 422 residues: MVMHAHAYPDIEIPTPSQIAAVALNNEPDENGEQSMVLSMGPQHPSTHGVLRLAVELNGENVVQLAPDVGFLHTGIEKTIETKTYTKSIVLTDRMDYLAPMSNNMVYVAAIEKLMQQDVPERAQTLRVLLLELTRINSHLVWLGTHALDLAAMSVFFYAMREREYILDIFEMLTGARMMTSYFRVGGLAWDIPADFIPTVEDFLTHFLPKVDEYEDLLTNNLLWKQRTKGVGVVNAADAIALGLSGANLRASGVDWDLRKTMPYSGYETYQFDVPVGQAGDIYDRYRCRVQEMRESVKIARQAIERVKQMHGQPYVTENRKVAPPPKSEITYSMESLIHHFKLWTEGFRPPRGSAYAAIESPRGEIGCYVVSDGTPKPWRVHFRAPSFINLQALPHIAKGKLMADLVALIASIDPVLGEVDR.

It belongs to the complex I 49 kDa subunit family. As to quaternary structure, NDH-1 is composed of 14 different subunits. Subunits NuoB, C, D, E, F, and G constitute the peripheral sector of the complex.

Its subcellular location is the cell membrane. The catalysed reaction is a quinone + NADH + 5 H(+)(in) = a quinol + NAD(+) + 4 H(+)(out). In terms of biological role, NDH-1 shuttles electrons from NADH, via FMN and iron-sulfur (Fe-S) centers, to quinones in the respiratory chain. The immediate electron acceptor for the enzyme in this species is believed to be ubiquinone. Couples the redox reaction to proton translocation (for every two electrons transferred, four hydrogen ions are translocated across the cytoplasmic membrane), and thus conserves the redox energy in a proton gradient. The protein is NADH-quinone oxidoreductase subunit D 1 of Herpetosiphon aurantiacus (strain ATCC 23779 / DSM 785 / 114-95).